Consider the following 774-residue polypeptide: E3 ubiquitin-protein ligase RFWD3 (774 aa).

Residues Ser46 and Ser63 each carry the phosphoserine; by ATM and ATR modification. 3 disordered regions span residues 95–116 (NPRT…PASS), 139–225 (PSSS…AEYG), and 257–280 (GGKT…ASMD). The span at 106–116 (SDGNHTIPASS) shows a compositional bias: polar residues. A compositionally biased stretch (basic residues) spans 150-162 (RTRRRVSASRRAR). Positions 211–221 (SSSSDSDSDSS) are enriched in low complexity. An RING-type; degenerate zinc finger spans residues 287-331 (CTICLEQWTNAGDHRLSALRCGHLFGYRCISTWLKGQVRKCPQCN). The stretch at 361–413 (SLLKEQMLRKQAELESAQCRLQLQVLTDKCTRLQRRVQDLQKLTSHQSQNLQQ) forms a coiled coil. WD repeat units follow at residues 495–537 (MHGK…QTYN), 539–577 (GRPV…SHVQ), and 583–628 (KARC…SHWP).

Interacts with MDM2 and p53/TP53. Binds to the RPA complex via direct interaction with RPA2. Interacts with RAD51. Post-translationally, phosphorylated at Ser-46 and Ser-63 upon DNA damage by ATM or ATR. ATM phosphorylation occurs at early times upon DNA damage, while ATR is the major kinase at later times. Phosphorylation by ATM and ATR is required to stabilize p53/TP53. Part of the phosphorylation depends upon RPA2 presence.

The protein resides in the nucleus. Its subcellular location is the PML body. It is found in the cytoplasm. The enzyme catalyses S-ubiquitinyl-[E2 ubiquitin-conjugating enzyme]-L-cysteine + [acceptor protein]-L-lysine = [E2 ubiquitin-conjugating enzyme]-L-cysteine + N(6)-ubiquitinyl-[acceptor protein]-L-lysine.. It functions in the pathway protein modification; protein ubiquitination. In terms of biological role, E3 ubiquitin-protein ligase required for the repair of DNA interstrand cross-links (ICL) in response to DNA damage. Plays a key role in RPA-mediated DNA damage signaling and repair. Acts by mediating ubiquitination of the RPA complex (RPA1, RPA2 and RPA3 subunits) and RAD51 at stalled replication forks, leading to remove them from DNA damage sites and promote homologous recombination. Also mediates the ubiquitination of p53/TP53 in the late response to DNA damage, and acts as a positive regulator of p53/TP53 stability, thereby regulating the G1/S DNA damage checkpoint. May act by catalyzing the formation of short polyubiquitin chains on p53/TP53 that are not targeted to the proteasome. In response to ionizing radiation, interacts with MDM2 and enhances p53/TP53 ubiquitination, possibly by restricting MDM2 from extending polyubiquitin chains on ubiquitinated p53/TP53. Required to translesion DNA synthesis across DNA-protein cross-link adducts by catalyzing ubiquitination of proteins on single-stranded DNA (ssDNA). The protein is E3 ubiquitin-protein ligase RFWD3 of Homo sapiens (Human).